Reading from the N-terminus, the 511-residue chain is GMP synthase [glutamine-hydrolyzing] (511 aa).

Residues 3–198 (SVLVLDFGSQ…LLNIAAITPD (196 aa)) enclose the Glutamine amidotransferase type-1 domain. Cysteine 80 acts as the Nucleophile in catalysis. Catalysis depends on residues histidine 172 and glutamate 174. Residues 199-386 (WSSKSFIEHQ…LGIPEDILMR (188 aa)) form the GMPS ATP-PPase domain. Residue 226 to 232 (SGGVDST) participates in ATP binding.

Homodimer.

The enzyme catalyses XMP + L-glutamine + ATP + H2O = GMP + L-glutamate + AMP + diphosphate + 2 H(+). Its pathway is purine metabolism; GMP biosynthesis; GMP from XMP (L-Gln route): step 1/1. Functionally, catalyzes the synthesis of GMP from XMP. The protein is GMP synthase [glutamine-hydrolyzing] of Chlorobium chlorochromatii (strain CaD3).